Consider the following 154-residue polypeptide: MSTSLAVVRLDPDLPLPSRAHDGDAGVDLYSAQDVELGPGERALVPTGVAVAIPHGMVGLIHPRSGLAARVGLSIVNTPGTVDAGYRGEIKVCLINLDTSTPITIGRGDRIAQLLVQRVELPELVEVTSFDEAGLADTTRGDGGYGSSGGHASL.

Residues 64 to 66 (RSG), Asn-77, 81 to 83 (TVD), and Lys-91 contribute to the substrate site.

This sequence belongs to the dUTPase family. As to quaternary structure, homotrimer. The cofactor is Mg(2+).

The catalysed reaction is dUTP + H2O = dUMP + diphosphate + H(+). It participates in pyrimidine metabolism; dUMP biosynthesis; dUMP from dCTP (dUTP route): step 2/2. This enzyme is involved in nucleotide metabolism: it produces dUMP, the immediate precursor of thymidine nucleotides and it decreases the intracellular concentration of dUTP so that uracil cannot be incorporated into DNA. This is Deoxyuridine 5'-triphosphate nucleotidohydrolase from Mycolicibacterium gilvum (strain PYR-GCK) (Mycobacterium gilvum (strain PYR-GCK)).